Reading from the N-terminus, the 470-residue chain is Neuraminidase (470 aa).

The Intravirion segment spans residues 1–6 (MNPNQK). A helical membrane pass occupies residues 7 to 27 (IITIGSISIAIGIISLMLQIG). Residues 11–33 (GSISIAIGIISLMLQIGNIISIW) are involved in apical transport and lipid raft association. Residues 28 to 470 (NIISIWASHS…GAELPFTIDK (443 aa)) are Virion surface-facing. The interval 36–90 (HSIQTGSQNHTGICNQRIITYENSTWVNHTYVNINNTNVVAGKDKTSVTLAGNSS) is hypervariable stalk region. N44, N58, N63, N70, and N88 each carry an N-linked (GlcNAc...) asparagine; by host glycan. Residues 91–470 (LCSISGWAIY…GAELPFTIDK (380 aa)) are head of neuraminidase. 8 disulfide bridges follow: C92-C417, C124-C129, C184-C231, C233-C238, C279-C292, C281-C290, C318-C335, and C421-C447. R118 serves as a coordination point for substrate. N-linked (GlcNAc...) asparagine; by host glycosylation is present at N146. D151 functions as the Proton donor/acceptor in the catalytic mechanism. R152 contacts substrate. The N-linked (GlcNAc...) asparagine; by host glycan is linked to N235. 277 to 278 (EE) is a binding site for substrate. A substrate-binding site is contributed by R293. Ca(2+) contacts are provided by D294, G298, and D324. Substrate is bound at residue R368. Y402 functions as the Nucleophile in the catalytic mechanism. N-linked (GlcNAc...) asparagine; by host glycans are attached at residues N434 and N455.

The protein belongs to the glycosyl hydrolase 34 family. In terms of assembly, homotetramer. Requires Ca(2+) as cofactor. In terms of processing, N-glycosylated.

Its subcellular location is the virion membrane. It localises to the host apical cell membrane. The catalysed reaction is Hydrolysis of alpha-(2-&gt;3)-, alpha-(2-&gt;6)-, alpha-(2-&gt;8)- glycosidic linkages of terminal sialic acid residues in oligosaccharides, glycoproteins, glycolipids, colominic acid and synthetic substrates.. Its activity is regulated as follows. Inhibited by the neuraminidase inhibitors zanamivir (Relenza) and oseltamivir (Tamiflu). These drugs interfere with the release of progeny virus from infected cells and are effective against all influenza strains. Resistance to neuraminidase inhibitors is quite rare. Its function is as follows. Catalyzes the removal of terminal sialic acid residues from viral and cellular glycoconjugates. Cleaves off the terminal sialic acids on the glycosylated HA during virus budding to facilitate virus release. Additionally helps virus spread through the circulation by further removing sialic acids from the cell surface. These cleavages prevent self-aggregation and ensure the efficient spread of the progeny virus from cell to cell. Otherwise, infection would be limited to one round of replication. Described as a receptor-destroying enzyme because it cleaves a terminal sialic acid from the cellular receptors. May facilitate viral invasion of the upper airways by cleaving the sialic acid moieties on the mucin of the airway epithelial cells. Likely to plays a role in the budding process through its association with lipid rafts during intracellular transport. May additionally display a raft-association independent effect on budding. Plays a role in the determination of host range restriction on replication and virulence. Sialidase activity in late endosome/lysosome traffic seems to enhance virus replication. The polypeptide is Neuraminidase (Aves (Human)).